Consider the following 73-residue polypeptide: MTCNHENPHFLFKIDSYSKTFLLSCYCVSIYRLEECSGRFKPSSYSLHLLKSLSIIICENPSQTFNIGLNQPK.

This is an uncharacterized protein from Schizosaccharomyces pombe (strain 972 / ATCC 24843) (Fission yeast).